The sequence spans 279 residues: Formamidopyrimidine-DNA glycosylase (279 aa).

The active-site Schiff-base intermediate with DNA is Pro2. Glu3 serves as the catalytic Proton donor. The active-site Proton donor; for beta-elimination activity is Lys57. Positions 90, 109, and 151 each coordinate DNA. The FPG-type zinc finger occupies 236–270 (FVYGRTGQPCRVCQTPIAVLRLGQRSTFYCPACQQ). Arg260 acts as the Proton donor; for delta-elimination activity in catalysis.

This sequence belongs to the FPG family. In terms of assembly, monomer. Zn(2+) is required as a cofactor.

It carries out the reaction Hydrolysis of DNA containing ring-opened 7-methylguanine residues, releasing 2,6-diamino-4-hydroxy-5-(N-methyl)formamidopyrimidine.. The enzyme catalyses 2'-deoxyribonucleotide-(2'-deoxyribose 5'-phosphate)-2'-deoxyribonucleotide-DNA = a 3'-end 2'-deoxyribonucleotide-(2,3-dehydro-2,3-deoxyribose 5'-phosphate)-DNA + a 5'-end 5'-phospho-2'-deoxyribonucleoside-DNA + H(+). In terms of biological role, involved in base excision repair of DNA damaged by oxidation or by mutagenic agents. Acts as a DNA glycosylase that recognizes and removes damaged bases. Has a preference for oxidized purines, such as 7,8-dihydro-8-oxoguanine (8-oxoG). Has AP (apurinic/apyrimidinic) lyase activity and introduces nicks in the DNA strand. Cleaves the DNA backbone by beta-delta elimination to generate a single-strand break at the site of the removed base with both 3'- and 5'-phosphates. This is Formamidopyrimidine-DNA glycosylase from Methylobacillus flagellatus (strain ATCC 51484 / DSM 6875 / VKM B-1610 / KT).